The following is a 192-amino-acid chain: Peptidyl-tRNA hydrolase (192 aa).

Tyr-17 is a binding site for tRNA. The active-site Proton acceptor is His-22. Positions 68, 70, and 116 each coordinate tRNA.

This sequence belongs to the PTH family. As to quaternary structure, monomer.

It is found in the cytoplasm. The catalysed reaction is an N-acyl-L-alpha-aminoacyl-tRNA + H2O = an N-acyl-L-amino acid + a tRNA + H(+). Functionally, hydrolyzes ribosome-free peptidyl-tRNAs (with 1 or more amino acids incorporated), which drop off the ribosome during protein synthesis, or as a result of ribosome stalling. Catalyzes the release of premature peptidyl moieties from peptidyl-tRNA molecules trapped in stalled 50S ribosomal subunits, and thus maintains levels of free tRNAs and 50S ribosomes. The polypeptide is Peptidyl-tRNA hydrolase (Mycobacterium sp. (strain JLS)).